Here is a 79-residue protein sequence, read N- to C-terminus: Sec-independent protein translocase protein TatA (79 aa).

Residues 1–21 traverse the membrane as a helical segment; that stretch reads MGGFTSIWHWVIVLLVIVLLF. Positions 46–79 are disordered; the sequence is DDEEEAKNEPKTLDAQATQTKVHETSEIKSKQES. Residues 66–79 show a composition bias toward basic and acidic residues; the sequence is KVHETSEIKSKQES.

The protein belongs to the TatA/E family. In terms of assembly, the Tat system comprises two distinct complexes: a TatABC complex, containing multiple copies of TatA, TatB and TatC subunits, and a separate TatA complex, containing only TatA subunits. Substrates initially bind to the TatABC complex, which probably triggers association of the separate TatA complex to form the active translocon.

The protein resides in the cell inner membrane. Its function is as follows. Part of the twin-arginine translocation (Tat) system that transports large folded proteins containing a characteristic twin-arginine motif in their signal peptide across membranes. TatA could form the protein-conducting channel of the Tat system. The polypeptide is Sec-independent protein translocase protein TatA (Helicobacter pylori (strain HPAG1)).